We begin with the raw amino-acid sequence, 588 residues long: WD repeat-containing protein DDB_G0349043 (588 aa).

The interval 1–32 (MPLDNKVQLNENGKEVNNNNNNDEDLKIQDNH) is disordered. The LisH domain maps to 40-72 (NRSELVRLLIQSLNSLGYDKSAEFLEKDSGISL). The region spanning 73 to 129 (QSKEINQFSECVVSGDWNKVEELLPFLKLNEFDTNNVKFLVYSQKFLEYLENHKIKE) is the CTLH domain. 3 WD repeats span residues 244–283 (KHRD…LDQP), 294–333 (GHTK…LLKT), and 336–375 (KHSD…LTNS). The interval 376–403 (NNNNNNHNNNNSNINGNSINGSNNNGNN) is disordered. WD repeat units lie at residues 413 to 452 (WACA…TPEV), 455 to 494 (METD…IVQK), 499 to 539 (KQGR…LLET), and 542 to 582 (RHSG…NSFI).

The protein is WD repeat-containing protein DDB_G0349043 of Dictyostelium discoideum (Social amoeba).